A 393-amino-acid polypeptide reads, in one-letter code: Elongation factor Tu (393 aa).

Residues 10–203 (KPHVNIGTIG…AVDNYIPEPV (194 aa)) enclose the tr-type G domain. A G1 region spans residues 19-26 (GHVDHGKT). 19–26 (GHVDHGKT) serves as a coordination point for GTP. Residue T26 participates in Mg(2+) binding. The G2 stretch occupies residues 60-64 (GITIS). Residues 81–84 (DCPG) form a G3 region. GTP is bound by residues 81–85 (DCPGH) and 136–139 (NKVD). The interval 136–139 (NKVD) is G4. Residues 173-175 (SAL) form a G5 region.

It belongs to the TRAFAC class translation factor GTPase superfamily. Classic translation factor GTPase family. EF-Tu/EF-1A subfamily. Monomer.

The protein localises to the cytoplasm. The enzyme catalyses GTP + H2O = GDP + phosphate + H(+). Functionally, GTP hydrolase that promotes the GTP-dependent binding of aminoacyl-tRNA to the A-site of ribosomes during protein biosynthesis. In Chlorobium phaeovibrioides (strain DSM 265 / 1930) (Prosthecochloris vibrioformis (strain DSM 265)), this protein is Elongation factor Tu.